We begin with the raw amino-acid sequence, 189 residues long: UPF0398 protein LGAS_1023 (189 aa).

It belongs to the UPF0398 family.

This Lactobacillus gasseri (strain ATCC 33323 / DSM 20243 / BCRC 14619 / CIP 102991 / JCM 1131 / KCTC 3163 / NCIMB 11718 / NCTC 13722 / AM63) protein is UPF0398 protein LGAS_1023.